A 345-amino-acid chain; its full sequence is D-erythrose-4-phosphate dehydrogenase (345 aa).

Residue 11 to 12 (RI) participates in NAD(+) binding. Substrate contacts are provided by residues 158 to 160 (SCT), Arg204, 217 to 218 (TK), and Arg240. Cys159 functions as the Nucleophile in the catalytic mechanism. NAD(+) is bound at residue Asn322.

This sequence belongs to the glyceraldehyde-3-phosphate dehydrogenase family. Epd subfamily. Homotetramer.

It localises to the cytoplasm. It carries out the reaction D-erythrose 4-phosphate + NAD(+) + H2O = 4-phospho-D-erythronate + NADH + 2 H(+). It participates in cofactor biosynthesis; pyridoxine 5'-phosphate biosynthesis; pyridoxine 5'-phosphate from D-erythrose 4-phosphate: step 1/5. Its function is as follows. Catalyzes the NAD-dependent conversion of D-erythrose 4-phosphate to 4-phosphoerythronate. The polypeptide is D-erythrose-4-phosphate dehydrogenase (Vibrio parahaemolyticus serotype O3:K6 (strain RIMD 2210633)).